The chain runs to 72 residues: Translation initiation factor IF-1 (72 aa).

An S1-like domain is found at 1-72 (MSKTDVVEIE…TKGRIIWRDK (72 aa)).

Belongs to the IF-1 family. In terms of assembly, component of the 30S ribosomal translation pre-initiation complex which assembles on the 30S ribosome in the order IF-2 and IF-3, IF-1 and N-formylmethionyl-tRNA(fMet); mRNA recruitment can occur at any time during PIC assembly.

The protein localises to the cytoplasm. Its function is as follows. One of the essential components for the initiation of protein synthesis. Stabilizes the binding of IF-2 and IF-3 on the 30S subunit to which N-formylmethionyl-tRNA(fMet) subsequently binds. Helps modulate mRNA selection, yielding the 30S pre-initiation complex (PIC). Upon addition of the 50S ribosomal subunit IF-1, IF-2 and IF-3 are released leaving the mature 70S translation initiation complex. This is Translation initiation factor IF-1 from Lachnoclostridium phytofermentans (strain ATCC 700394 / DSM 18823 / ISDg) (Clostridium phytofermentans).